The following is a 230-amino-acid chain: Cytochrome c oxidase subunit 2 (230 aa).

The Mitochondrial intermembrane portion of the chain corresponds to 1-14; it reads MAHPTQLGFQDAAS. A helical membrane pass occupies residues 15–45; that stretch reads PVMEELLHFHDHALMIVFLISALVLYVIITT. At 46–59 the chain is on the mitochondrial matrix side; sequence VSTKLTNMYILDSQ. Residues 60–87 traverse the membrane as a helical segment; sequence EIEIVWTVLPALILILIALPSLRILYLM. At 88 to 230 the chain is on the mitochondrial intermembrane side; it reads DEINDPHLTI…NWSTLMLKDA (143 aa). Cu cation is bound by residues H161, C196, E198, C200, H204, and M207. E198 provides a ligand contact to Mg(2+).

Belongs to the cytochrome c oxidase subunit 2 family. In terms of assembly, component of the cytochrome c oxidase (complex IV, CIV), a multisubunit enzyme composed of 14 subunits. The complex is composed of a catalytic core of 3 subunits MT-CO1, MT-CO2 and MT-CO3, encoded in the mitochondrial DNA, and 11 supernumerary subunits COX4I, COX5A, COX5B, COX6A, COX6B, COX6C, COX7A, COX7B, COX7C, COX8 and NDUFA4, which are encoded in the nuclear genome. The complex exists as a monomer or a dimer and forms supercomplexes (SCs) in the inner mitochondrial membrane with NADH-ubiquinone oxidoreductase (complex I, CI) and ubiquinol-cytochrome c oxidoreductase (cytochrome b-c1 complex, complex III, CIII), resulting in different assemblies (supercomplex SCI(1)III(2)IV(1) and megacomplex MCI(2)III(2)IV(2)). Found in a complex with TMEM177, COA6, COX18, COX20, SCO1 and SCO2. Interacts with TMEM177 in a COX20-dependent manner. Interacts with COX20. Interacts with COX16. Requires Cu cation as cofactor.

It localises to the mitochondrion inner membrane. It carries out the reaction 4 Fe(II)-[cytochrome c] + O2 + 8 H(+)(in) = 4 Fe(III)-[cytochrome c] + 2 H2O + 4 H(+)(out). Its function is as follows. Component of the cytochrome c oxidase, the last enzyme in the mitochondrial electron transport chain which drives oxidative phosphorylation. The respiratory chain contains 3 multisubunit complexes succinate dehydrogenase (complex II, CII), ubiquinol-cytochrome c oxidoreductase (cytochrome b-c1 complex, complex III, CIII) and cytochrome c oxidase (complex IV, CIV), that cooperate to transfer electrons derived from NADH and succinate to molecular oxygen, creating an electrochemical gradient over the inner membrane that drives transmembrane transport and the ATP synthase. Cytochrome c oxidase is the component of the respiratory chain that catalyzes the reduction of oxygen to water. Electrons originating from reduced cytochrome c in the intermembrane space (IMS) are transferred via the dinuclear copper A center (CU(A)) of subunit 2 and heme A of subunit 1 to the active site in subunit 1, a binuclear center (BNC) formed by heme A3 and copper B (CU(B)). The BNC reduces molecular oxygen to 2 water molecules using 4 electrons from cytochrome c in the IMS and 4 protons from the mitochondrial matrix. The protein is Cytochrome c oxidase subunit 2 (mt-co2) of Formosania lacustris (Oriental stream loach).